A 149-amino-acid chain; its full sequence is MRWVKSSQPRKQRRALFNAPLHKRQKLMAAPLSPELRKQYGIRSLPVRVGDEVVIMRGDFKGHRGKVVRVDLRRMRIFVEGVTITNARGEPRYYPIHPSNVMIVSLNLDDERRRQIIERKRRQRELQLALMKAAAGGSAEAIGEEGKAS.

Belongs to the universal ribosomal protein uL24 family. As to quaternary structure, part of the 50S ribosomal subunit.

One of two assembly initiator proteins, it binds directly to the 5'-end of the 23S rRNA, where it nucleates assembly of the 50S subunit. In terms of biological role, located at the polypeptide exit tunnel on the outside of the subunit. In Hyperthermus butylicus (strain DSM 5456 / JCM 9403 / PLM1-5), this protein is Large ribosomal subunit protein uL24.